We begin with the raw amino-acid sequence, 332 residues long: Holliday junction branch migration complex subunit RuvB (332 aa).

A large ATPase domain (RuvB-L) region spans residues 1–182 (MNKNFIESNL…FAFTCRLEYY (182 aa)). Residues Leu21, Arg22, Gly63, Lys66, Thr67, Thr68, 129–131 (EDF), Arg172, Tyr182, and Arg219 each bind ATP. Mg(2+) is bound at residue Thr67. Residues 183–253 (DPMILQKILL…VANRALTMLS (71 aa)) are small ATPAse domain (RuvB-S). The tract at residues 256 to 332 (EKGLDEMDKK…YQHIVGSSQR (77 aa)) is head domain (RuvB-H). 2 residues coordinate DNA: Arg311 and Arg316.

This sequence belongs to the RuvB family. Homohexamer. Forms an RuvA(8)-RuvB(12)-Holliday junction (HJ) complex. HJ DNA is sandwiched between 2 RuvA tetramers; dsDNA enters through RuvA and exits via RuvB. An RuvB hexamer assembles on each DNA strand where it exits the tetramer. Each RuvB hexamer is contacted by two RuvA subunits (via domain III) on 2 adjacent RuvB subunits; this complex drives branch migration. In the full resolvosome a probable DNA-RuvA(4)-RuvB(12)-RuvC(2) complex forms which resolves the HJ.

Its subcellular location is the cytoplasm. The enzyme catalyses ATP + H2O = ADP + phosphate + H(+). In terms of biological role, the RuvA-RuvB-RuvC complex processes Holliday junction (HJ) DNA during genetic recombination and DNA repair, while the RuvA-RuvB complex plays an important role in the rescue of blocked DNA replication forks via replication fork reversal (RFR). RuvA specifically binds to HJ cruciform DNA, conferring on it an open structure. The RuvB hexamer acts as an ATP-dependent pump, pulling dsDNA into and through the RuvAB complex. RuvB forms 2 homohexamers on either side of HJ DNA bound by 1 or 2 RuvA tetramers; 4 subunits per hexamer contact DNA at a time. Coordinated motions by a converter formed by DNA-disengaged RuvB subunits stimulates ATP hydrolysis and nucleotide exchange. Immobilization of the converter enables RuvB to convert the ATP-contained energy into a lever motion, pulling 2 nucleotides of DNA out of the RuvA tetramer per ATP hydrolyzed, thus driving DNA branch migration. The RuvB motors rotate together with the DNA substrate, which together with the progressing nucleotide cycle form the mechanistic basis for DNA recombination by continuous HJ branch migration. Branch migration allows RuvC to scan DNA until it finds its consensus sequence, where it cleaves and resolves cruciform DNA. In Protochlamydia amoebophila (strain UWE25), this protein is Holliday junction branch migration complex subunit RuvB.